A 191-amino-acid polypeptide reads, in one-letter code: UPF0312 protein Shewana3_1179 (191 aa).

A signal peptide spans 1 to 22 (MKKQLLAALIGGSLLAPMAASA).

Belongs to the UPF0312 family. Type 1 subfamily.

Its subcellular location is the periplasm. The sequence is that of UPF0312 protein Shewana3_1179 from Shewanella sp. (strain ANA-3).